We begin with the raw amino-acid sequence, 392 residues long: Elongation factor Tu-3 (392 aa).

One can recognise a tr-type G domain in the interval 10-206 (KPHLNIGTMG…AVDTYVPMPE (197 aa)). Positions 19 to 26 (GHVDHGKT) are G1. 19–26 (GHVDHGKT) is a GTP binding site. Mg(2+) is bound at residue Thr26. The segment at 63 to 67 (GITIN) is G2. Residues 84-87 (DMPG) are G3. Residues 84–88 (DMPGH) and 139–142 (NKAD) contribute to the GTP site. Residues 139–142 (NKAD) form a G4 region. Residues 176-178 (SGL) form a G5 region.

It belongs to the TRAFAC class translation factor GTPase superfamily. Classic translation factor GTPase family. EF-Tu/EF-1A subfamily. As to quaternary structure, monomer.

It is found in the cytoplasm. It catalyses the reaction GTP + H2O = GDP + phosphate + H(+). GTP hydrolase that promotes the GTP-dependent binding of aminoacyl-tRNA to the A-site of ribosomes during protein biosynthesis. This Streptomyces coelicolor (strain ATCC BAA-471 / A3(2) / M145) protein is Elongation factor Tu-3.